We begin with the raw amino-acid sequence, 175 residues long: NADH-quinone oxidoreductase subunit I (175 aa).

2 4Fe-4S ferredoxin-type domains span residues 69–98 and 115–144; these read KRDE…IEAG and KKFE…LDGP. Positions 78, 81, 84, 88, 124, 127, 130, and 134 each coordinate [4Fe-4S] cluster.

This sequence belongs to the complex I 23 kDa subunit family. NDH-1 is composed of 14 different subunits. Subunits NuoA, H, J, K, L, M, N constitute the membrane sector of the complex. It depends on [4Fe-4S] cluster as a cofactor.

The protein localises to the cell inner membrane. It carries out the reaction a quinone + NADH + 5 H(+)(in) = a quinol + NAD(+) + 4 H(+)(out). Its function is as follows. NDH-1 shuttles electrons from NADH, via FMN and iron-sulfur (Fe-S) centers, to quinones in the respiratory chain. The immediate electron acceptor for the enzyme in this species is believed to be ubiquinone. Couples the redox reaction to proton translocation (for every two electrons transferred, four hydrogen ions are translocated across the cytoplasmic membrane), and thus conserves the redox energy in a proton gradient. The sequence is that of NADH-quinone oxidoreductase subunit I from Leptospira borgpetersenii serovar Hardjo-bovis (strain JB197).